Consider the following 168-residue polypeptide: Photosystem I assembly protein Ycf3 (168 aa).

TPR repeat units follow at residues 35–68 (AFTY…EIDP), 72–105 (SYIL…NPFL), and 120–153 (GEKA…TPGN).

It belongs to the Ycf3 family.

Its subcellular location is the plastid membrane. Essential for the assembly of the photosystem I (PSI) complex. May act as a chaperone-like factor to guide the assembly of the PSI subunits. The sequence is that of Photosystem I assembly protein Ycf3 from Cuscuta exaltata (Tall dodder).